Here is a 393-residue protein sequence, read N- to C-terminus: Riboflavin biosynthesis protein RibBA (393 aa).

The segment at 1–200 (MQFDNIDSAL…IDDLIEYRKK (200 aa)) is DHBP synthase. Residues 27–28 (RE), D32, 139–143 (RNGHT), and E163 each bind D-ribulose 5-phosphate. E28 contributes to the Mg(2+) binding site. H142 is a binding site for Mg(2+). The tract at residues 201 to 393 (LEPEIEFKAK…TKKIKMGHLI (193 aa)) is GTP cyclohydrolase II. Residue 249-253 (RLHSA) participates in GTP binding. C254, C265, and C267 together coordinate Zn(2+). GTP contacts are provided by residues Q270, 291–293 (EGR), and T313. D325 functions as the Proton acceptor; for GTP cyclohydrolase activity in the catalytic mechanism. R327 serves as the catalytic Nucleophile; for GTP cyclohydrolase activity. The GTP site is built by S348 and K353.

This sequence in the N-terminal section; belongs to the DHBP synthase family. In the C-terminal section; belongs to the GTP cyclohydrolase II family. Mg(2+) serves as cofactor. Requires Mn(2+) as cofactor. It depends on Zn(2+) as a cofactor.

The enzyme catalyses D-ribulose 5-phosphate = (2S)-2-hydroxy-3-oxobutyl phosphate + formate + H(+). It catalyses the reaction GTP + 4 H2O = 2,5-diamino-6-hydroxy-4-(5-phosphoribosylamino)-pyrimidine + formate + 2 phosphate + 3 H(+). It functions in the pathway cofactor biosynthesis; riboflavin biosynthesis; 2-hydroxy-3-oxobutyl phosphate from D-ribulose 5-phosphate: step 1/1. Its pathway is cofactor biosynthesis; riboflavin biosynthesis; 5-amino-6-(D-ribitylamino)uracil from GTP: step 1/4. Its function is as follows. Catalyzes the conversion of D-ribulose 5-phosphate to formate and 3,4-dihydroxy-2-butanone 4-phosphate. Catalyzes the conversion of GTP to 2,5-diamino-6-ribosylamino-4(3H)-pyrimidinone 5'-phosphate (DARP), formate and pyrophosphate. In Staphylococcus aureus (strain MSSA476), this protein is Riboflavin biosynthesis protein RibBA.